A 226-amino-acid polypeptide reads, in one-letter code: MADKRKYVIPGDVVTTGPFRPEQNTVLEGNKIISTTIGISEIYDDSVRVIPLTGKYIPKINDLVIGKVNSHTSLSWELDINSCYVGFLPAQDVFGRDFSAHADELATKLRTGDLVAARIANFDRTRDPLVSISDRDLGKIDSGVLMEISPSKVPRLIGKKGSMIQMIEEATDAAVTIGQNGWVVVSCESPEGLLKAKKAIQMVNEQAHVANLTDQVKEMLDKKGES.

The 75-residue stretch at 61–135 folds into the S1 motif domain; sequence NDLVIGKVNS…RDPLVSISDR (75 aa). A KH domain is found at 141–200; the sequence is DSGVLMEISPSKVPRLIGKKGSMIQMIEEATDAAVTIGQNGWVVVSCESPEGLLKAKKAI.

It belongs to the RRP4 family. In terms of assembly, component of the archaeal exosome complex. Forms a trimer of Rrp4 and/or Csl4 subunits. The trimer associates with a hexameric ring-like arrangement composed of 3 Rrp41-Rrp42 heterodimers.

The protein resides in the cytoplasm. Functionally, non-catalytic component of the exosome, which is a complex involved in RNA degradation. Increases the RNA binding and the efficiency of RNA degradation. Confers strong poly(A) specificity to the exosome. This is Exosome complex component Rrp4 from Nitrosopumilus maritimus (strain SCM1).